The primary structure comprises 287 residues: MRLSLIAAARAEGVAAKGLLRAHKWWSLRRLTQIMALGVFMAGPLAGVWLVRGNFASSEILGVLPLSDPFIALQSLMTGAVPAGVALLGAALIVLFYLVVGGRAYCGWICPVNIVTDTAYWLREKLGITRDRKLDRRTRLWVLAGALLASFLSGAIAWEFVNPVSLLQRGLIFGLGVGWTVIAAVFLLDLLVTRRGWCGHLCPVGAFYGIVGKTSLVRVAAARREGCTNCGACFQICTEPHVITPALKGTGSTLILSGDCVNCGSCIDACPVNVFEMTMRGRSISPH.

4Fe-4S ferredoxin-type domains follow at residues arginine 218–lysine 248 and glycine 251–arginine 280. Residues cysteine 227, cysteine 230, cysteine 233, cysteine 237, cysteine 260, cysteine 263, cysteine 266, and cysteine 270 each contribute to the [4Fe-4S] cluster site.

It functions in the pathway one-carbon metabolism; methylamine degradation. In terms of biological role, involved in electron transfer. The sequence is that of Methylamine utilization ferredoxin-type protein MauN (mauN) from Methylorubrum extorquens (strain ATCC 14718 / DSM 1338 / JCM 2805 / NCIMB 9133 / AM1) (Methylobacterium extorquens).